Here is a 167-residue protein sequence, read N- to C-terminus: Translation initiation factor IF-3 (167 aa).

The protein belongs to the IF-3 family. As to quaternary structure, monomer.

Its subcellular location is the cytoplasm. IF-3 binds to the 30S ribosomal subunit and shifts the equilibrium between 70S ribosomes and their 50S and 30S subunits in favor of the free subunits, thus enhancing the availability of 30S subunits on which protein synthesis initiation begins. The protein is Translation initiation factor IF-3 of Bacillus anthracis.